Here is a 548-residue protein sequence, read N- to C-terminus: Thermolysin (548 aa).

The N-terminal stretch at 1–28 (MKMKMKLASFGLAAGLAAQVFLPYNALA) is a signal peptide. Positions 29-232 (STEHVTWNQQ…DAAKPGDVKS (204 aa)) are cleaved as a propeptide — activation peptide. Ca(2+)-binding residues include Asp-289, Asp-291, Gln-293, and Asp-370. Residue His-374 coordinates Zn(2+). Residue Glu-375 is part of the active site. 2 residues coordinate Zn(2+): His-378 and Glu-398. Glu-409, Asn-415, Asp-417, Glu-419, Glu-422, Tyr-425, Thr-426, Ile-429, and Asp-432 together coordinate Ca(2+). Residue His-463 is the Proton donor of the active site.

It belongs to the peptidase M4 family. The cofactor is Ca(2+). Zn(2+) serves as cofactor.

The protein localises to the secreted. It carries out the reaction Preferential cleavage: Xaa-|-Leu &gt; Xaa-|-Phe.. In terms of biological role, extracellular zinc metalloprotease. The chain is Thermolysin (npr) from Bacillus thermoproteolyticus.